The chain runs to 562 residues: Putative transport protein NT01EI_2530 (562 aa).

The next 6 membrane-spanning stretches (helical) occupy residues 8 to 28, 32 to 52, 66 to 86, 94 to 114, 118 to 138, and 158 to 178; these read LLTGNYILLLFVVLALGLCLG, LGSIQLGNSIGVLVVSLLLGQ, FMLFIFCVGVEAGPNFFSIFF, MLALVMVASALCIALGLGKLF, IGLTAGMLAGSMTSTPVLVGA, and HLSLGYALTYLVGLVSLIFGA. RCK C-terminal domains follow at residues 202 to 288 and 290 to 373; these read LDND…SFRN and KEVF…RIGF. The next 5 membrane-spanning stretches (helical) occupy residues 383-403, 406-426, 443-463, 477-497, and 541-561; these read LLAFCAFFIIGLMIGLITFQF, FSFGIGNAAGLLFAGIMLGFL, MVKEFGLMVFMAGVGLSAGAG, IAGLIVSLVPVVICFLFGAFV, and IANVLLTLAGTLIIIVWPGVV.

Belongs to the AAE transporter (TC 2.A.81) family. YbjL subfamily.

The protein localises to the cell membrane. In Edwardsiella ictaluri (strain 93-146), this protein is Putative transport protein NT01EI_2530.